The chain runs to 278 residues: Diaminopimelate epimerase (278 aa).

2 residues coordinate substrate: Asn-11 and Asn-63. Cys-72 (proton donor) is an active-site residue. Substrate is bound by residues 73–74 (GN), Asn-160, Asn-193, and 211–212 (ER). Residue Cys-220 is the Proton acceptor of the active site. 221–222 (GT) serves as a coordination point for substrate.

The protein belongs to the diaminopimelate epimerase family. In terms of assembly, homodimer.

The protein localises to the cytoplasm. It carries out the reaction (2S,6S)-2,6-diaminopimelate = meso-2,6-diaminopimelate. It participates in amino-acid biosynthesis; L-lysine biosynthesis via DAP pathway; DL-2,6-diaminopimelate from LL-2,6-diaminopimelate: step 1/1. Catalyzes the stereoinversion of LL-2,6-diaminopimelate (L,L-DAP) to meso-diaminopimelate (meso-DAP), a precursor of L-lysine and an essential component of the bacterial peptidoglycan. This chain is Diaminopimelate epimerase, found in Desulforudis audaxviator (strain MP104C).